The chain runs to 503 residues: Putative FBD-associated F-box protein At5g56410 (503 aa).

An F-box domain is found at 2–50 (DKITGFSDDELLVKILSFLPTKAAVTTSILSKQWKFLWMRLPKLEYHDD). Residues 361–412 (FWEQMITSVPQCLLSSLQTFKWLGNGDSIEGKDLATFILRNSCQLKTATISI) form the FBD domain.

This Arabidopsis thaliana (Mouse-ear cress) protein is Putative FBD-associated F-box protein At5g56410.